The following is a 170-amino-acid chain: uncharacterized protein (170 aa).

It is found in the mitochondrion. This is an uncharacterized protein from Arabidopsis thaliana (Mouse-ear cress).